A 561-amino-acid polypeptide reads, in one-letter code: Asparagine synthetase [glutamine-hydrolyzing] (561 aa).

The For GATase activity role is filled by C2. A Glutamine amidotransferase type-2 domain is found at 2–191 (CGIWALFGSD…PGHYEVLDLK (190 aa)). L-glutamine-binding positions include 49 to 53 (RLAVV), 75 to 77 (NGE), and D97. The region spanning 213–536 (HALYDNVEKL…PGRADWLSHY (324 aa)) is the Asparagine synthetase domain. ATP-binding positions include L256, I288, and 363–364 (SG). Position 385 is an N6-acetyllysine (K385). T545 is modified (phosphothreonine). S557 bears the Phosphoserine mark.

The catalysed reaction is L-aspartate + L-glutamine + ATP + H2O = L-asparagine + L-glutamate + AMP + diphosphate + H(+). It functions in the pathway amino-acid biosynthesis; L-asparagine biosynthesis; L-asparagine from L-aspartate (L-Gln route): step 1/1. The chain is Asparagine synthetase [glutamine-hydrolyzing] (ASNS) from Pongo abelii (Sumatran orangutan).